A 139-amino-acid polypeptide reads, in one-letter code: Superoxide dismutase [Cu-Zn] (139 aa).

Cys-6 is lipidated: S-palmitoyl cysteine. Cu cation-binding residues include His-47 and His-49. Residues His-72, His-81, and Asp-84 each coordinate Zn(2+). His-114 contacts Cu cation. A compositionally biased stretch (basic and acidic residues) spans 118–129 (DDLGKGGNDESL). Residues 118 to 139 (DDLGKGGNDESLKTGNAGGRMA) form a disordered region.

It belongs to the Cu-Zn superoxide dismutase family. In terms of assembly, homodimer. Requires Cu cation as cofactor. Zn(2+) serves as cofactor.

It is found in the cytoplasm. The protein localises to the nucleus. The catalysed reaction is 2 superoxide + 2 H(+) = H2O2 + O2. Destroys radicals which are normally produced within the cells and which are toxic to biological systems. The polypeptide is Superoxide dismutase [Cu-Zn] (sod1) (Lampanyctus crocodilus (Jewel lanternfish)).